A 212-amino-acid polypeptide reads, in one-letter code: Ras-related protein Rab-15 (212 aa).

Positions 17, 18, 19, 20, 21, 22, 23, 35, 39, and 40 each coordinate GTP. Thr22 is a Mg(2+) binding site. Short sequence motifs (switch) lie at residues Asn31–Phe45 and Asp63–Arg80. Mg(2+) contacts are provided by Thr40 and Asp63. GTP contacts are provided by Gly66, Asn121, Lys122, Asp124, Ser151, and Ala152. The interval Glu192–Cys212 is disordered. Residues Cys210 and Cys212 are each lipidated (S-geranylgeranyl cysteine). Cysteine methyl ester is present on Cys212.

The protein belongs to the small GTPase superfamily. Rab family. As to quaternary structure, the GTP bound form of RAB15 interacts with REP15. Interacts (GTP-bound form) with MICAL1, MICAL3, MICALCL, EHBP1 and EHBP1L1. The cofactor is Mg(2+).

It is found in the cell membrane. The catalysed reaction is GTP + H2O = GDP + phosphate + H(+). Its activity is regulated as follows. Regulated by guanine nucleotide exchange factors (GEFs) which promote the exchange of bound GDP for free GTP. Regulated by GTPase activating proteins (GAPs) which increase the GTP hydrolysis activity. Inhibited by GDP dissociation inhibitors (GDIs). The small GTPases Rab are key regulators of intracellular membrane trafficking, from the formation of transport vesicles to their fusion with membranes. Rabs cycle between an inactive GDP-bound form and an active GTP-bound form that is able to recruit to membranes different sets of downstream effectors directly responsible for vesicle formation, movement, tethering and fusion. RAB15 may act in concert with RAB3A in regulating aspects of synaptic vesicle membrane flow within the nerve terminal. This is Ras-related protein Rab-15 (RAB15) from Bos taurus (Bovine).